A 463-amino-acid chain; its full sequence is Probable glycosyltransferase 3 (463 aa).

Positions 1 to 20 (MAVTGGGRPAARQQAARGKQ) are disordered. Topologically, residues 1-24 (MAVTGGGRPAARQQAARGKQMQRT) are cytoplasmic. Residues 9–20 (PAARQQAARGKQ) are compositionally biased toward low complexity. A helical; Signal-anchor for type II membrane protein transmembrane segment spans residues 25 to 47 (FNNVKITLICGFITLLVLRGTVG). Topologically, residues 48–463 (INLLTYGVGG…ALKMDAKIES (416 aa)) are lumenal. A disordered region spans residues 82–125 (EIRSDTDDDDDDEEEEPLGVDASTTTTTNSTTTTATAARRRSSN). Acidic residues predominate over residues 87-99 (TDDDDDDEEEEPL). Residues 103-118 (ASTTTTTNSTTTTATA) show a composition bias toward low complexity. N-linked (GlcNAc...) asparagine glycosylation is found at Asn110, Asn125, and Asn442.

The protein belongs to the glycosyltransferase 34 family.

The protein localises to the golgi apparatus membrane. Functionally, probable glycosyltransferase that may be involved in the biosynthesis of xyloglucan. The chain is Probable glycosyltransferase 3 from Oryza sativa subsp. indica (Rice).